The primary structure comprises 368 residues: Decarboxylase yanB (368 aa).

Zn(2+) contacts are provided by H7, H9, and H159. N-linked (GlcNAc...) asparagine glycosylation is present at N169. D283 lines the Zn(2+) pocket. Residues 339–359 (WGAFSACLLLPVGLSALYSVL) form a helical membrane-spanning segment.

This sequence belongs to the metallo-dependent hydrolases superfamily. ACMSD family.

The protein localises to the membrane. It catalyses the reaction 6-methylsalicylate + H(+) = 3-methylphenol + CO2. The protein operates within secondary metabolite biosynthesis; terpenoid biosynthesis. Functionally, decarboxylase; part of the gene cluster that mediates the biosynthesis of yanuthone D, a fungal isoprenoid epoxycyclohexenone that acts as an antibiotic against fungi and bacteria. The first step of the pathway is the synthesis of 6-methylsalicylic acid (6-MSA) by the polyketide synthase yanA. 6-MSA is then converted to m-cresol by the decarboxylase yanB. The cytochrome P450 monooxygenase yanC then catalyzes the oxidation of m-cresol to toluquinol. Epoxidation of toluquinol is then performed by the short chain dehydrogenase yanD, with the help of yanE, and a further prenylation by yanG leads to 7-deacetoxyyanuthone A. The next step is the hydroxylation of C-22 of 7-deacetoxyyanuthone A by the cytochrome P450 monooxygenase yanH to yield 22-deacetylyanuthone A. O-Mevalon transferase yanI then attaches mevalon to the hydroxyl group of 22-deacetylyanuthone A to produce yanuthone E. Finally, the FAD-dependent monooxygenase yanF oxidizes the hydroxyl group at C15 of yanuthone E to form yanuthone D. Furthermore, several branching points in the pathway lead to the production of yanuthones F and G from 7-deacetoxyyanuthone A; yanuthones H and I from 22-deacetylyanuthone A; and yanuthone J from yanuthone E. The sequence is that of Decarboxylase yanB from Aspergillus niger (strain ATCC 1015 / CBS 113.46 / FGSC A1144 / LSHB Ac4 / NCTC 3858a / NRRL 328 / USDA 3528.7).